The chain runs to 1176 residues: MDNNPNINECIPYNCLSNPEVEVLGGERIETGYTPIDISLSLTQFLLSEFVPGAGFVLGLVDIIWGIFGPSQWDAFPVQIEQLINQRIEEFARNQAISRLEGLSNLYQIYAESFREWEADPTNPALREEMRIQFNDMNSALTTAIPLLAVQNYQVPLLSVYVQAANLHLSVLRDVSVFGQRWGFDAATINSRYNDLTRLIGNYTDYAVRWYNTGLERVWGPDSRDWVRYNQFRRELTLTVLDIVALFSNYDSRRYPIRTVSQLTREIYTNPVLENFDGSFRGMAQRIEQNIRQPHLMDILNSITIYTDVHRGFNYWSGHQITASPVGFSGPEFAFPLFGNAGNAAPPVLVSLTGLGIFRTLSSPLYRRIILGSGPNNQELFVLDGTEFSFASLTTNLPSTIYRQRGTVDSLDVIPPQDNSVPPRAGFSHRLSHVTMLSQAAGAVYTLRAPTFSWQHRSAEFNNIIPSSQITQIPLTKSTNLGSGTSVVKGPGFTGGDILRRTSPGQISTLRVNITAPLSQRYRVRIRYASTTNLQFHTSIDGRPINQGNFSATMSSGSNLQSGSFRTVGFTTPFNFSNGSSVFTLSAHVFNSGNEVYIDRIEFVPAEVTFEAEYDLERAQKAVNELFTSSNQIGLKTDVTDYHIDQVSNLVECLSDEFCLDEKQELSEKVKHAKRLSDERNLLQDPNFRGINRQLDRGWRGSTDITIQGGDDVFKENYVTLLGTFDECYPTYLYQKIDESKLKAYTRYQLRGYIEDSQDLEIYLIRYNAKHETVNVPGTGSLWPLSAQSPIGKCGEPNRCAPHLEWNPDLDCSCRDGEKCAHHSHHFSLDIDVGCTDLNEDLGVWVIFKIKTQDGHARLGNLEFLEEKPLVGEALARVKRAEKKWRDKREKLEWETNIVYKEAKESVDALFVNSQYDQLQADTNIAMIHAADKRVHSIREAYLPELSVIPGVNAAIFEELEGRIFTAFSLYDARNVIKNGDFNNGLSCWNVKGHVDVEEQNNQRSVLVVPEWEAEVSQEVRVCPGRGYILRVTAYKEGYGEGCVTIHEIENNTDELKFSNCVEEEIYPNNTVTCNDYTVNQEEYGGAYTSRNRGYNEAPSVPADYASVYEEKSYTDGRRENPCEFNRGYRDYTPLPVGYVTKELEYFPETDKVWIEIGETEGTFIVDSVELLLMEE.

This sequence belongs to the delta endotoxin family.

Functionally, promotes colloidosmotic lysis by binding to the midgut epithelial cells of many lepidopteran larvae. In Bacillus thuringiensis subsp. entomocidus, this protein is Pesticidal crystal protein Cry1Aa (cry1Aa).